The sequence spans 573 residues: Thiol:disulfide interchange protein DsbD (573 aa).

The first 20 residues, 1 to 20 (MLKRFFLLLSSLLLVCNVQA), serve as a signal peptide directing secretion. Residues 21-175 (GLFNNKPQYL…AENLSNNYLS (155 aa)) are Periplasmic-facing. Intrachain disulfides connect Cys-121–Cys-126 and Cys-191–Cys-313. Residues 176–196 (IFGFLLLGIGLAFTPCVLPML) traverse the membrane as a helical segment. Residues 197–227 (PLLSAIVIGHKNRPNTSRALLLSFTYVQGMA) are Cytoplasmic-facing. A helical membrane pass occupies residues 228–248 (LTYTLLGLTVAAIGLPFQVAL). The Periplasmic portion of the chain corresponds to 249–251 (QSP). The helical transmembrane segment at 252-272 (AVLISLAVLFTLLAASMFGLF) threads the bilayer. At 273 to 292 (EIRLPNTWQQKLNALSQQQQ) the chain is on the cytoplasmic side. The chain crosses the membrane as a helical span at residues 293 to 313 (GGAVGNVFIMGIIAGLVASPC). The Periplasmic segment spans residues 314-331 (TSAPLSGALLYVAQSGNL). Residues 332 to 352 (LIGGLALYLLALGMGLPLILI) traverse the membrane as a helical segment. The Cytoplasmic portion of the chain corresponds to 353–365 (TVFGNQILPKSGE). A helical membrane pass occupies residues 366 to 386 (WLFKVKTAFGFVMLALPIFLI). Residues 387 to 393 (SRILPSH) are Periplasmic-facing. The chain crosses the membrane as a helical span at residues 394-414 (YEPFLWSTLALAFLGWLISSL). At 415–425 (NYSTMLKQAVR) the chain is on the cytoplasmic side. Residues 426 to 446 (ILLFIAFGLTAYPWANLVWQT) form a helical membrane-spanning segment. One can recognise a Thioredoxin domain in the interval 440 to 573 (ANLVWQTTSN…NQFLAWLNRL (134 aa)). At 447-573 (TSNTAQPTTP…NQFLAWLNRL (127 aa)) the chain is on the periplasmic side. Residues Cys-490 and Cys-493 are joined by a disulfide bond.

The protein belongs to the thioredoxin family. DsbD subfamily.

It is found in the cell inner membrane. It catalyses the reaction [protein]-dithiol + NAD(+) = [protein]-disulfide + NADH + H(+). It carries out the reaction [protein]-dithiol + NADP(+) = [protein]-disulfide + NADPH + H(+). Required to facilitate the formation of correct disulfide bonds in some periplasmic proteins and for the assembly of the periplasmic c-type cytochromes. Acts by transferring electrons from cytoplasmic thioredoxin to the periplasm. This transfer involves a cascade of disulfide bond formation and reduction steps. In Haemophilus ducreyi (strain 35000HP / ATCC 700724), this protein is Thiol:disulfide interchange protein DsbD.